We begin with the raw amino-acid sequence, 293 residues long: Biphenyl-2,3-diol 1,2-dioxygenase (293 aa).

2 VOC domains span residues 5–119 (RLGY…IYYG) and 143–265 (GIGH…FGWG). 3 residues coordinate Fe cation: H146, H210, and E261.

Belongs to the extradiol ring-cleavage dioxygenase family. Homooctamer. Requires Fe(2+) as cofactor.

The enzyme catalyses biphenyl-2,3-diol + O2 = 2-hydroxy-6-oxo-6-phenylhexa-2,4-dienoate + H(+). Its pathway is xenobiotic degradation; biphenyl degradation; 2-hydroxy-2,4-pentadienoate and benzoate from biphenyl: step 3/4. The protein is Biphenyl-2,3-diol 1,2-dioxygenase (bphC) of Pseudomonas sp. (strain KKS102).